We begin with the raw amino-acid sequence, 239 residues long: MMEWRDEGALLSVRRHGESSAIIEVFTAAHGRHAGVVRGGASRKIAPILQPGAQLDLTWKARLDEHMGAFTVEPLRSRTALLGDRLGLAGLNAICAMLHVTLPEREPHSTLWQESMALLDALDRPGWPPAYLRWEMRLLEETGFGLDLTRCAVTGSREDLAFVSPKTGRAVSRGAAGGWADRLFPLPLALLGQGPASAEEVRQGLAITGHFLGRELAPLLNGRPLPEARARLMELLARA.

The protein belongs to the RecO family.

In terms of biological role, involved in DNA repair and RecF pathway recombination. The chain is DNA repair protein RecO from Cereibacter sphaeroides (strain ATCC 17029 / ATH 2.4.9) (Rhodobacter sphaeroides).